A 77-amino-acid chain; its full sequence is Acyl carrier protein (77 aa).

A Carrier domain is found at Ala2–Leu77. At Ser37 the chain carries O-(pantetheine 4'-phosphoryl)serine.

The protein belongs to the acyl carrier protein (ACP) family. Post-translationally, 4'-phosphopantetheine is transferred from CoA to a specific serine of apo-ACP by AcpS. This modification is essential for activity because fatty acids are bound in thioester linkage to the sulfhydryl of the prosthetic group.

The protein localises to the cytoplasm. Its pathway is lipid metabolism; fatty acid biosynthesis. Its function is as follows. Carrier of the growing fatty acid chain in fatty acid biosynthesis. In Bacillus anthracis (strain A0248), this protein is Acyl carrier protein.